Here is a 265-residue protein sequence, read N- to C-terminus: 4-hydroxy-tetrahydrodipicolinate reductase (265 aa).

NAD(+) contacts are provided by residues glycine 7 to methionine 12 and aspartate 33. Residue arginine 34 participates in NADP(+) binding. NAD(+)-binding positions include glycine 96–threonine 98 and alanine 120–methionine 123. Residue histidine 153 is the Proton donor/acceptor of the active site. Histidine 154 is a (S)-2,3,4,5-tetrahydrodipicolinate binding site. Lysine 157 (proton donor) is an active-site residue. Glycine 163–threonine 164 contributes to the (S)-2,3,4,5-tetrahydrodipicolinate binding site.

This sequence belongs to the DapB family.

Its subcellular location is the cytoplasm. The enzyme catalyses (S)-2,3,4,5-tetrahydrodipicolinate + NAD(+) + H2O = (2S,4S)-4-hydroxy-2,3,4,5-tetrahydrodipicolinate + NADH + H(+). The catalysed reaction is (S)-2,3,4,5-tetrahydrodipicolinate + NADP(+) + H2O = (2S,4S)-4-hydroxy-2,3,4,5-tetrahydrodipicolinate + NADPH + H(+). The protein operates within amino-acid biosynthesis; L-lysine biosynthesis via DAP pathway; (S)-tetrahydrodipicolinate from L-aspartate: step 4/4. Catalyzes the conversion of 4-hydroxy-tetrahydrodipicolinate (HTPA) to tetrahydrodipicolinate. The protein is 4-hydroxy-tetrahydrodipicolinate reductase of Burkholderia vietnamiensis (strain G4 / LMG 22486) (Burkholderia cepacia (strain R1808)).